A 163-amino-acid chain; its full sequence is Beta-lactoglobulin-2 (163 aa).

Cystine bridges form between Cys-66–Cys-161 and Cys-106–Cys-120.

It belongs to the calycin superfamily. Lipocalin family. Monomer.

The protein localises to the secreted. Lactoglobulin is the primary component of whey, it binds retinol and is probably involved in the transport of that molecule. The chain is Beta-lactoglobulin-2 (LGB2) from Equus asinus (Donkey).